The sequence spans 384 residues: Probable RNA 3'-terminal phosphate cyclase-like protein (384 aa).

Belongs to the RNA 3'-terminal cyclase family. Type 2 subfamily. As to quaternary structure, part of the small subunit (SSU) processome, composed of more than 70 proteins and the RNA chaperone small nucleolar RNA (snoRNA) U3.

The protein resides in the nucleus. The protein localises to the nucleolus. Part of the small subunit (SSU) processome, first precursor of the small eukaryotic ribosomal subunit. During the assembly of the SSU processome in the nucleolus, many ribosome biogenesis factors, an RNA chaperone and ribosomal proteins associate with the nascent pre-rRNA and work in concert to generate RNA folding, modifications, rearrangements and cleavage as well as targeted degradation of pre-ribosomal RNA by the RNA exosome. Does not have cyclase activity. This is Probable RNA 3'-terminal phosphate cyclase-like protein (Rtc1) from Drosophila melanogaster (Fruit fly).